Here is a 142-residue protein sequence, read N- to C-terminus: FAD synthase (142 aa).

Residues 9 to 10 (TF), 14 to 17 (HPGH), Asp92, and Tyr119 each bind ATP.

Belongs to the archaeal FAD synthase family. In terms of assembly, homodimer. The cofactor is a divalent metal cation.

It carries out the reaction FMN + ATP + H(+) = FAD + diphosphate. Its pathway is cofactor biosynthesis; FAD biosynthesis; FAD from FMN: step 1/1. Its function is as follows. Catalyzes the transfer of the AMP portion of ATP to flavin mononucleotide (FMN) to produce flavin adenine dinucleotide (FAD) coenzyme. The protein is FAD synthase of Halorhabdus utahensis (strain DSM 12940 / JCM 11049 / AX-2).